The following is a 205-amino-acid chain: Putative 3-methyladenine DNA glycosylase (205 aa).

This sequence belongs to the DNA glycosylase MPG family.

The sequence is that of Putative 3-methyladenine DNA glycosylase from Bacillus cereus (strain Q1).